A 442-amino-acid polypeptide reads, in one-letter code: tRNA modification GTPase MnmE (442 aa).

3 residues coordinate (6S)-5-formyl-5,6,7,8-tetrahydrofolate: Arg-21, Glu-79, and Lys-118. Residues 214–367 (GFKIAIVGKP…LKEELQNYLN (154 aa)) enclose the TrmE-type G domain. Residue Asn-224 participates in K(+) binding. GTP contacts are provided by residues 224–229 (NVGKSS), 243–249 (SDIAGTT), and 268–271 (DTAG). Ser-228 provides a ligand contact to Mg(2+). Residues Ser-243, Ile-245, and Thr-248 each contribute to the K(+) site. Thr-249 provides a ligand contact to Mg(2+). Lys-442 contacts (6S)-5-formyl-5,6,7,8-tetrahydrofolate.

This sequence belongs to the TRAFAC class TrmE-Era-EngA-EngB-Septin-like GTPase superfamily. TrmE GTPase family. In terms of assembly, homodimer. Heterotetramer of two MnmE and two MnmG subunits. It depends on K(+) as a cofactor.

The protein localises to the cytoplasm. Exhibits a very high intrinsic GTPase hydrolysis rate. Involved in the addition of a carboxymethylaminomethyl (cmnm) group at the wobble position (U34) of certain tRNAs, forming tRNA-cmnm(5)s(2)U34. In Campylobacter jejuni (strain RM1221), this protein is tRNA modification GTPase MnmE.